A 94-amino-acid polypeptide reads, in one-letter code: Putative pterin-4-alpha-carbinolamine dehydratase (94 aa).

It belongs to the pterin-4-alpha-carbinolamine dehydratase family.

The catalysed reaction is (4aS,6R)-4a-hydroxy-L-erythro-5,6,7,8-tetrahydrobiopterin = (6R)-L-erythro-6,7-dihydrobiopterin + H2O. The polypeptide is Putative pterin-4-alpha-carbinolamine dehydratase (Mycobacterium tuberculosis (strain ATCC 25177 / H37Ra)).